Consider the following 556-residue polypeptide: Potassium-transporting ATPase potassium-binding subunit (556 aa).

Helical transmembrane passes span 6–26 (AGLI…VPLG), 65–85 (GVLA…LVQG), 133–153 (GLAV…VALV), 176–196 (LRIL…GGAI), 249–269 (PTAW…FSLP), 283–303 (YAIA…MLWF), 378–398 (GLYG…LMVG), 419–439 (YFLV…ALPG), 483–503 (ALGL…LALA), and 526–546 (FVGM…LPML).

Belongs to the KdpA family. In terms of assembly, the system is composed of three essential subunits: KdpA, KdpB and KdpC.

Its subcellular location is the cell membrane. Its function is as follows. Part of the high-affinity ATP-driven potassium transport (or Kdp) system, which catalyzes the hydrolysis of ATP coupled with the electrogenic transport of potassium into the cytoplasm. This subunit binds the extracellular potassium ions and delivers the ions to the membrane domain of KdpB through an intramembrane tunnel. The protein is Potassium-transporting ATPase potassium-binding subunit of Mycobacterium avium (strain 104).